Reading from the N-terminus, the 276-residue chain is 4-deoxy-L-threo-5-hexosulose-uronate ketol-isomerase (276 aa).

The Zn(2+) site is built by His194, His196, Glu201, and His243.

This sequence belongs to the KduI family. It depends on Zn(2+) as a cofactor.

It catalyses the reaction 5-dehydro-4-deoxy-D-glucuronate = 3-deoxy-D-glycero-2,5-hexodiulosonate. The protein operates within glycan metabolism; pectin degradation; 2-dehydro-3-deoxy-D-gluconate from pectin: step 4/5. Its function is as follows. Catalyzes the isomerization of 5-dehydro-4-deoxy-D-glucuronate to 3-deoxy-D-glycero-2,5-hexodiulosonate. The chain is 4-deoxy-L-threo-5-hexosulose-uronate ketol-isomerase from Caldicellulosiruptor bescii (strain ATCC BAA-1888 / DSM 6725 / KCTC 15123 / Z-1320) (Anaerocellum thermophilum).